The chain runs to 264 residues: Thiazole synthase (264 aa).

The Schiff-base intermediate with DXP role is filled by Lys106. 1-deoxy-D-xylulose 5-phosphate is bound by residues Gly167, 193-194, and 215-216; these read AG and NS.

The protein belongs to the ThiG family. Homotetramer. Forms heterodimers with either ThiH or ThiS.

It is found in the cytoplasm. The enzyme catalyses [ThiS sulfur-carrier protein]-C-terminal-Gly-aminoethanethioate + 2-iminoacetate + 1-deoxy-D-xylulose 5-phosphate = [ThiS sulfur-carrier protein]-C-terminal Gly-Gly + 2-[(2R,5Z)-2-carboxy-4-methylthiazol-5(2H)-ylidene]ethyl phosphate + 2 H2O + H(+). It participates in cofactor biosynthesis; thiamine diphosphate biosynthesis. In terms of biological role, catalyzes the rearrangement of 1-deoxy-D-xylulose 5-phosphate (DXP) to produce the thiazole phosphate moiety of thiamine. Sulfur is provided by the thiocarboxylate moiety of the carrier protein ThiS. In vitro, sulfur can be provided by H(2)S. This is Thiazole synthase from Prochlorococcus marinus (strain MIT 9215).